The chain runs to 276 residues: Prohibitin 1 (276 aa).

The protein belongs to the prohibitin family.

Functionally, required for larval metabolism or for the progression of the larva into a pupa. This is Prohibitin 1 from Drosophila melanogaster (Fruit fly).